Here is a 1704-residue protein sequence, read N- to C-terminus: Type-2 histone deacetylase 2 (1704 aa).

Disordered regions lie at residues 1 to 303, 315 to 383, and 540 to 634; these read MSTN…SEER, TQGS…TSKK, and QFLQ…IGNS. Residues 15 to 69 are compositionally biased toward low complexity; sequence TTITNESNTDNNNNNNDDNKNNTENTTSPTNNNNTNDNDNNSDNNNNKNNNNNNS. Over residues 70–81 the composition is skewed to polar residues; the sequence is QVTEEQQVTLED. The span at 97–113 shows a compositional bias: acidic residues; the sequence is DSAEEDEDEMEDDDEDA. Residues 134-153 show a composition bias toward polar residues; the sequence is KVQQSTNTHLSQTTPESPTI. The span at 165–176 shows a compositional bias: low complexity; the sequence is STSTNNTPNTQS. Over residues 186-195 the composition is skewed to basic and acidic residues; sequence LTSDEEKDLM. Over residues 196–210 the composition is skewed to acidic residues; that stretch reads LSEESDGGVGEDDDS. Residues 222-286 are compositionally biased toward low complexity; the sequence is NQSNQNQNNN…SNNDNNNNNN (65 aa). A compositionally biased stretch (polar residues) spans 315–325; sequence TQGSSTTTSDP. Over residues 326-351 the composition is skewed to low complexity; the sequence is NNQNNQINQINQNNQNNQNNQNNQNN. Over residues 354–369 the composition is skewed to acidic residues; that stretch reads GEEEFGEEFEEEEEDM. A compositionally biased stretch (basic residues) spans 372–382; that stretch reads PKKKTKYKTSK. 2 stretches are compositionally biased toward low complexity: residues 540-549 and 561-580; these read QFLQQQQQQQ and NSNN…NNNS. Residues 608 to 620 are compositionally biased toward basic and acidic residues; that stretch reads YETRKYTKKRNDE. Residues D1165 and G1227 each coordinate substrate. 3 residues coordinate a divalent metal cation: D1256, H1258, and D1350. The interval 1485–1704 is disordered; it reads QLERQKQLQQ…TPQNINNSDN (220 aa). Over residues 1491 to 1616 the composition is skewed to low complexity; it reads QLQQQQQQAQ…NNSNNNNNMN (126 aa). Residues 1649–1669 show a composition bias toward polar residues; the sequence is LSPNSVNRGNNPSNISMSGAQ. Residues 1677–1698 are compositionally biased toward low complexity; the sequence is SPKPSNSPNSPSTSNNNGTPQN.

Belongs to the histone deacetylase family. HD type 2 subfamily.

It localises to the nucleus. The protein localises to the cytoplasm. It catalyses the reaction N(6)-acetyl-L-lysyl-[histone] + H2O = L-lysyl-[histone] + acetate. In terms of biological role, responsible for the deacetylation of lysine residues on the N-terminal part of the core histones (H2A, H2B, H3 and H4). Histone deacetylation plays an important role in transcriptional regulation, cell cycle progression and developmental events. Histone deacetylases act via the formation of large multiprotein complexes. The sequence is that of Type-2 histone deacetylase 2 (hdaC) from Dictyostelium discoideum (Social amoeba).